Reading from the N-terminus, the 789-residue chain is Leucine-rich repeat and fibronectin type-III domain-containing protein 2 (789 aa).

The first 20 residues, 1–20, serve as a signal peptide directing secretion; that stretch reads METLLGGLLAFGMAFAVVDA. The 32-residue stretch at 21 to 52 folds into the LRRNT domain; sequence CPKYCVCQNLSESLGTLCPSKGLLFVPPDIDR. Residues 21 to 534 lie on the Extracellular side of the membrane; it reads CPKYCVCQNL…MHSQILGGTM (514 aa). Residue Asn29 is glycosylated (N-linked (GlcNAc...) asparagine). 7 LRR repeats span residues 53–74, 77–98, 101–122, 125–146, 150–171, 174–195, and 198–219; these read RTVE…DFAN, GLVD…SFLD, SLRS…TLRG, NLQH…AFED, TLED…SVRR, NLHQ…TFAD, and KLAR…PIFA. The 47-residue stretch at 242-288 folds into the LRRCT domain; that stretch reads NPLHCNCELLWLRRLERDDDLETCGSPGGLKGRYFWHVREEEFVCEP. The Ig-like domain maps to 289 to 375; it reads PLITQHTHKL…GEATAMVEVS (87 aa). The cysteines at positions 310 and 359 are disulfide-linked. N-linked (GlcNAc...) asparagine glycosylation is found at Asn332, Asn341, and Asn384. Residues 383-424 form a disordered region; the sequence is SNSTSRTAPPKSRLSDITGSSKTSRGGGGSGGGEPPKSPPER. Over residues 407–416 the composition is skewed to gly residues; that stretch reads RGGGGSGGGE. One can recognise a Fibronectin type-III domain in the interval 421–518; sequence PPERAVLVSE…GCAQFFTKAD (98 aa). Residues 535–555 form a helical membrane-spanning segment; it reads ILVIGGIIVATLLVFIVILMV. The Cytoplasmic portion of the chain corresponds to 556–789; sequence RYKVCNHEAP…SSEWVMESTV (234 aa). 3 disordered regions span residues 577 to 602, 619 to 654, and 668 to 702; these read SQTN…PPKV, SDSS…PSLD, and QRKE…LGPP. Pro residues predominate over residues 583-599; it reads QPPPPSSAPAGAPPQGP. The segment covering 619–638 has biased composition (low complexity); the sequence is SDSSSSSSLGSGEAAGLGRA. The span at 641–650 shows a compositional bias: pro residues; it reads RIPPSAPRPK. Residues 786–789 carry the PDZ-binding motif; the sequence is ESTV.

It belongs to the LRFN family. Forms heteromeric complexes with LRFN1, LRFN3, LRFN4 and LRFN5. Can form homomeric complexes, but not across cell junctions. Directly interacts with 2 NMDA receptor subunits GRIN1 and GRIN2A. Interacts with DLG1, DLG2, DLG3 and DLG4. In terms of processing, glycosylated.

It is found in the membrane. It localises to the synapse. Its subcellular location is the postsynaptic cell membrane. Its function is as follows. Promotes neurite outgrowth in hippocampal neurons. Enhances the cell surface expression of 2 NMDA receptor subunits GRIN1 and GRIN2A. May play a role in redistributing DLG4 to the cell periphery. This is Leucine-rich repeat and fibronectin type-III domain-containing protein 2 (LRFN2) from Homo sapiens (Human).